Consider the following 340-residue polypeptide: Phenylalanine--tRNA ligase alpha subunit (340 aa).

E251 contacts Mg(2+).

Belongs to the class-II aminoacyl-tRNA synthetase family. Phe-tRNA synthetase alpha subunit type 1 subfamily. As to quaternary structure, tetramer of two alpha and two beta subunits. Mg(2+) is required as a cofactor.

It localises to the cytoplasm. It carries out the reaction tRNA(Phe) + L-phenylalanine + ATP = L-phenylalanyl-tRNA(Phe) + AMP + diphosphate + H(+). This chain is Phenylalanine--tRNA ligase alpha subunit, found in Porphyromonas gingivalis (strain ATCC 33277 / DSM 20709 / CIP 103683 / JCM 12257 / NCTC 11834 / 2561).